Reading from the N-terminus, the 128-residue chain is Cytochrome c-type biogenesis protein CcmE (128 aa).

Topologically, residues 1–8 are cytoplasmic; the sequence is MQKIVRNR. The helical; Signal-anchor for type II membrane protein transmembrane segment at 9–29 threads the bilayer; that stretch reads LIKIIICFCSACLGISIILYN. Topologically, residues 30-128 are periplasmic; that stretch reads LEKNIIFFFP…KHDENYRPPS (99 aa). 2 residues coordinate heme: histidine 120 and tyrosine 124.

The protein belongs to the CcmE/CycJ family.

It is found in the cell inner membrane. Its function is as follows. Heme chaperone required for the biogenesis of c-type cytochromes. Transiently binds heme delivered by CcmC and transfers the heme to apo-cytochromes in a process facilitated by CcmF and CcmH. The sequence is that of Cytochrome c-type biogenesis protein CcmE from Rickettsia prowazekii (strain Madrid E).